A 391-amino-acid polypeptide reads, in one-letter code: Rhizopuspepsin-2 (391 aa).

The first 21 residues, 1–21 (MKLTLISSCVALAFMALATEA), serve as a signal peptide directing secretion. Positions 22–68 (APSGKKLSIPLTKNTNYKPSAKNAIQKALAKYHRFRTTSSSNSTSTE) are cleaved as a propeptide — activation peptide. The Peptidase A1 domain occupies 84-388 (YYGKVTVGTP…NQEVPEVQIA (305 aa)). Asp102 is an active-site residue. The cysteines at positions 115 and 118 are disulfide-linked. Residue Asp285 is part of the active site. A disulfide bridge links Cys319 with Cys352.

This sequence belongs to the peptidase A1 family.

The catalysed reaction is Hydrolysis of proteins with broad specificity similar to that of pepsin A, preferring hydrophobic residues at P1 and P1'. Clots milk and activates trypsinogen. Does not cleave 4-Gln-|-His-5, but does cleave 10-His-|-Leu-11 and 12-Val-|-Glu-13 in B chain of insulin.. The polypeptide is Rhizopuspepsin-2 (Rhizopus niveus).